The primary structure comprises 140 residues: Large ribosomal subunit protein uL14 (140 aa).

This sequence belongs to the universal ribosomal protein uL14 family.

The sequence is that of Large ribosomal subunit protein uL14 (rpl-23) from Caenorhabditis elegans.